The following is a 112-amino-acid chain: T cell receptor alpha variable 2 (112 aa).

An N-terminal signal peptide occupies residues Met1–Ser25. The region spanning Lys26–Glu112 is the Ig-like domain. A disulfide bridge connects residues Cys47 and Cys109. N-linked (GlcNAc...) asparagine glycans are attached at residues Asn48 and Asn84.

In terms of assembly, alpha-beta TR is a heterodimer composed of an alpha and beta chain; disulfide-linked. The alpha-beta TR is associated with the transmembrane signaling CD3 coreceptor proteins to form the TR-CD3 (TcR or TCR). The assembly of alpha-beta TR heterodimers with CD3 occurs in the endoplasmic reticulum where a single alpha-beta TR heterodimer associates with one CD3D-CD3E heterodimer, one CD3G-CD3E heterodimer and one CD247 homodimer forming a stable octameric structure. CD3D-CD3E and CD3G-CD3E heterodimers preferentially associate with TR alpha and TR beta chains, respectively. The association of the CD247 homodimer is the last step of TcR assembly in the endoplasmic reticulum and is required for transport to the cell surface.

The protein localises to the cell membrane. Functionally, v region of the variable domain of T cell receptor (TR) alpha chain that participates in the antigen recognition. Alpha-beta T cell receptors are antigen specific receptors which are essential to the immune response and are present on the cell surface of T lymphocytes. Recognize peptide-major histocompatibility (MH) (pMH) complexes that are displayed by antigen presenting cells (APC), a prerequisite for efficient T cell adaptive immunity against pathogens. Binding of alpha-beta TR to pMH complex initiates TR-CD3 clustering on the cell surface and intracellular activation of LCK that phosphorylates the ITAM motifs of CD3G, CD3D, CD3E and CD247 enabling the recruitment of ZAP70. In turn ZAP70 phosphorylates LAT, which recruits numerous signaling molecules to form the LAT signalosome. The LAT signalosome propagates signal branching to three major signaling pathways, the calcium, the mitogen-activated protein kinase (MAPK) kinase and the nuclear factor NF-kappa-B (NF-kB) pathways, leading to the mobilization of transcription factors that are critical for gene expression and essential for T cell growth and differentiation. The T cell repertoire is generated in the thymus, by V-(D)-J rearrangement. This repertoire is then shaped by intrathymic selection events to generate a peripheral T cell pool of self-MH restricted, non-autoaggressive T cells. Post-thymic interaction of alpha-beta TR with the pMH complexes shapes TR structural and functional avidity. The polypeptide is T cell receptor alpha variable 2 (Homo sapiens (Human)).